Here is a 364-residue protein sequence, read N- to C-terminus: MHLRRVRTMPRHSQSLTMAPYSSVSLVEQLEDRILCHEKTTAALVEHAFRIKDDIVSSLQKMQNKGGGDRLARLFLEEHIRNITAIVKQLNRDIEVLQEQIRARDNISYGTNSALKTLEMRQLSGLGDLRGRVARCDASIARLSAEHKTTYEGLQHLNKEQQAAKLILETKIKDAEGQISQLLNRVDLSISEQSTKLKMSHRDSNHQLQLLDTKFKGTVEELSNQILSARSWLQQEQERIEKELLQKIDHLSLIVKENSGASERDMEKKLTQMSARLDKIEESQRRNAEGQRKPEEEKVHGRISKLELQMTEDMKEMKAEVNAGFTAIYESIGSLRQVLEAKMKLDRDQLQKQIQQMQKPESSM.

Positions 80 to 107 (IRNITAIVKQLNRDIEVLQEQIRARDNI) form a coiled coil. Basic and acidic residues predominate over residues 275–300 (ARLDKIEESQRRNAEGQRKPEEEKVH). The interval 275–301 (ARLDKIEESQRRNAEGQRKPEEEKVHG) is disordered.

Belongs to the FAM81 family. As to quaternary structure, interacts with DLG4/PSD-95, GRIN2B/GLUN2B and SYNGAP1; the interactions facilitate condensate formation. Highly expressed in brain (at protein level).

The protein resides in the postsynaptic density. The protein localises to the cytoplasm. Its function is as follows. Facilitates the interaction and assembly of proteins within the postsynaptic density by promoting the condensation of postsynaptic proteins via liquid-liquid phase separation. Required for neuronal activity. Accumulation at the postsynaptic density results in enlargement of dendritic spines. The polypeptide is Protein FAM81A (Rattus norvegicus (Rat)).